We begin with the raw amino-acid sequence, 128 residues long: Flagellar basal body rod protein FlgB (128 aa).

The protein belongs to the flagella basal body rod proteins family. As to quaternary structure, the basal body constitutes a major portion of the flagellar organelle and consists of a number of rings mounted on a central rod. In Gram-negative bacteria, at least four rings, L, P, S and M are present, whereas Gram-positive bacteria lack the L and P rings. The rod consists of about 26 subunits of FlgG in the distal portion, and FlgB, FlgC and FlgF build up the proximal portion of the rod with about 6 subunits each. Rod assembly occurs by export via the flagellum-specific pathway of its constituent proteins and by their incorporation into the rod structure in the probable order of FlgB, FlgC, FlgF and FlgG. Another protein, FliE, also assembles onto the stable rod structure.

It is found in the bacterial flagellum basal body. Its function is as follows. Structural component of flagellum, the bacterial motility apparatus. Part of the rod structure of flagellar basal body. The sequence is that of Flagellar basal body rod protein FlgB from Cereibacter sphaeroides (Rhodobacter sphaeroides).